Reading from the N-terminus, the 350-residue chain is MARRISMATRTELVEAIIERYRSSCRADKQRILDEFVAVTGYHRKHAIRVLRPSESEPPCARQYAVRYGPEVREALVALWEASDRLCSKRLKPLIPILLPALERHGRLDLSTELRDKLLTVSAATMDRLLSEIRVVARGGQRRRAGMSSAVRRSVPVRTFGDWNDPLPGYVEVDFVAHSGTSSSGSFVQTMVLTDIATGWTECVPVRTRESGLVIAALNQARSLFPFPLQGVDFDNDSAFMNERVVCWCRSQGLEVTRSRAYRKNDQAWVEQKNGAIVRRLVGYGRLVGAEATAALGRLYDVVRLYGNLFQPSFKLREKTRIGARVVKRYHPPVPPIARGGCPFRCGRGR.

Residues Asn164–Val327 form the Integrase catalytic domain.

This is an uncharacterized protein from Sinorhizobium fredii (strain NBRC 101917 / NGR234).